The chain runs to 252 residues: 5'-nucleotidase SurE (252 aa).

Aspartate 8, aspartate 9, serine 39, and asparagine 95 together coordinate a divalent metal cation.

Belongs to the SurE nucleotidase family. A divalent metal cation serves as cofactor.

It is found in the cytoplasm. The enzyme catalyses a ribonucleoside 5'-phosphate + H2O = a ribonucleoside + phosphate. Its function is as follows. Nucleotidase that shows phosphatase activity on nucleoside 5'-monophosphates. This Clostridium botulinum (strain ATCC 19397 / Type A) protein is 5'-nucleotidase SurE.